We begin with the raw amino-acid sequence, 261 residues long: Indole-3-glycerol phosphate synthase (261 aa).

This sequence belongs to the TrpC family.

It carries out the reaction 1-(2-carboxyphenylamino)-1-deoxy-D-ribulose 5-phosphate + H(+) = (1S,2R)-1-C-(indol-3-yl)glycerol 3-phosphate + CO2 + H2O. Its pathway is amino-acid biosynthesis; L-tryptophan biosynthesis; L-tryptophan from chorismate: step 4/5. This is Indole-3-glycerol phosphate synthase from Burkholderia multivorans (strain ATCC 17616 / 249).